Consider the following 103-residue polypeptide: Large ribosomal subunit protein uL24 (103 aa).

Belongs to the universal ribosomal protein uL24 family. As to quaternary structure, part of the 50S ribosomal subunit.

Functionally, one of two assembly initiator proteins, it binds directly to the 5'-end of the 23S rRNA, where it nucleates assembly of the 50S subunit. In terms of biological role, one of the proteins that surrounds the polypeptide exit tunnel on the outside of the subunit. This is Large ribosomal subunit protein uL24 from Geobacillus sp. (strain WCH70).